A 273-amino-acid chain; its full sequence is MADKKKKGSKKGGKKVDPFTRKEWYVVRAPTQFFKSPADNKVGFTPVNRTQGTKLASDGLKGRVYEVSLADMKDDESQVFRKIKLRAEEVEGRNVLTNFYGMDLTSDKLRSLIHKWSTLIECFVDVKTTDGYFLRVFAICFTKKGESQKKKTSYAKTSRVKAIRKKMVDILTETVSSNDLKTVVDYLIGVSLNGVTTNASGFAPTLAEKIRIEGSSIFPIHNVFIRKVKVLKTPKVDAAKLSELYASSATSTIAPTEEVGTAVERTEETTTTA.

The protein belongs to the eukaryotic ribosomal protein eS1 family. Component of the small ribosomal subunit. Mature ribosomes consist of a small (40S) and a large (60S) subunit. The 40S subunit contains about 33 different proteins and 1 molecule of RNA (18S). The 60S subunit contains about 49 different proteins and 3 molecules of RNA (25S, 5.8S and 5S).

The protein resides in the cytoplasm. The sequence is that of Small ribosomal subunit protein eS1 (rps3a) from Dictyostelium discoideum (Social amoeba).